The sequence spans 247 residues: Orotidine 5'-phosphate decarboxylase (247 aa).

Residues Asp-21, Lys-43, 70–79, Thr-129, Arg-190, Gln-199, Gly-219, and Arg-220 contribute to the substrate site; that span reads DMKFHDIPNT. The active-site Proton donor is the Lys-72.

Belongs to the OMP decarboxylase family. Type 1 subfamily. As to quaternary structure, homodimer.

The catalysed reaction is orotidine 5'-phosphate + H(+) = UMP + CO2. Its pathway is pyrimidine metabolism; UMP biosynthesis via de novo pathway; UMP from orotate: step 2/2. In terms of biological role, catalyzes the decarboxylation of orotidine 5'-monophosphate (OMP) to uridine 5'-monophosphate (UMP). This is Orotidine 5'-phosphate decarboxylase from Chromobacterium violaceum (strain ATCC 12472 / DSM 30191 / JCM 1249 / CCUG 213 / NBRC 12614 / NCIMB 9131 / NCTC 9757 / MK).